Consider the following 404-residue polypeptide: uncharacterized protein (404 aa).

Polar residues predominate over residues 262 to 278 (VSTGDTSPCGTEDSSPA). Disordered regions lie at residues 262–307 (VSTG…SPSL) and 319–340 (MKKSHSANDSEEFFREDDSGAD). Phosphoserine is present on residues Ser268, Ser276, and Ser279. Residues Thr290 and Thr293 each carry the phosphothreonine modification. Residues Ser304, Ser306, Ser324, Ser358, and Ser362 each carry the phosphoserine modification. Residues 319–336 (MKKSHSANDSEEFFREDD) are compositionally biased toward basic and acidic residues.

This is an uncharacterized protein from Mus musculus (Mouse).